The primary structure comprises 265 residues: ATP synthase subunit a (265 aa).

The next 5 helical transmembrane spans lie at Phe-25 to Trp-45, Ile-88 to Ile-108, Asp-142 to Ile-162, Leu-207 to Trp-227, and Phe-233 to Leu-253.

The protein belongs to the ATPase A chain family. F-type ATPases have 2 components, CF(1) - the catalytic core - and CF(0) - the membrane proton channel. CF(1) has five subunits: alpha(3), beta(3), gamma(1), delta(1), epsilon(1). CF(0) has three main subunits: a(1), b(2) and c(9-12). The alpha and beta chains form an alternating ring which encloses part of the gamma chain. CF(1) is attached to CF(0) by a central stalk formed by the gamma and epsilon chains, while a peripheral stalk is formed by the delta and b chains.

It localises to the cell inner membrane. Functionally, key component of the proton channel; it plays a direct role in the translocation of protons across the membrane. The polypeptide is ATP synthase subunit a (Idiomarina loihiensis (strain ATCC BAA-735 / DSM 15497 / L2-TR)).